Reading from the N-terminus, the 163-residue chain is Photosystem II extrinsic protein V (163 aa).

The first 26 residues, 1–26 (MLKRSSWLATLLGLLTVASVSTIVYA), serve as a signal peptide directing secretion. Residues Cys-63, Cys-66, His-67, and His-118 each contribute to the heme c site.

This sequence belongs to the cytochrome c family. PsbV subfamily. PSII is composed of 1 copy each of membrane proteins PsbA, PsbB, PsbC, PsbD, PsbE, PsbF, PsbH, PsbI, PsbJ, PsbK, PsbL, PsbM, PsbT, PsbY, PsbZ, Psb30/Ycf12, at least 3 peripheral proteins of the oxygen-evolving complex and a large number of cofactors. It forms dimeric complexes. The extrinsic subunits in red algae are PsbO (OEC33), PsbQ', cytochrome c-550 and PsbU. The cofactor is heme c.

Its subcellular location is the plastid. The protein resides in the chloroplast thylakoid membrane. Its function is as follows. One of the extrinsic, lumenal subunits of photosystem II (PSII). PSII is a light-driven water plastoquinone oxidoreductase, using light energy to abstract electrons from H(2)O, generating a proton gradient subsequently used for ATP formation. The extrinsic proteins stabilize the structure of photosystem II oxygen-evolving complex (OEC), the ion environment of oxygen evolution and protect the OEC against heat-induced inactivation. The protein is Photosystem II extrinsic protein V of Porphyra purpurea (Red seaweed).